The chain runs to 216 residues: Uracil phosphoribosyltransferase (216 aa).

5-phospho-alpha-D-ribose 1-diphosphate-binding positions include Arg-85, Arg-110, and 135–143 (DPMVATGYS). Residues Ile-200 and 205 to 207 (GDA) contribute to the uracil site. Asp-206 is a 5-phospho-alpha-D-ribose 1-diphosphate binding site.

The protein belongs to the UPRTase family. It depends on Mg(2+) as a cofactor.

The catalysed reaction is UMP + diphosphate = 5-phospho-alpha-D-ribose 1-diphosphate + uracil. It functions in the pathway pyrimidine metabolism; UMP biosynthesis via salvage pathway; UMP from uracil: step 1/1. Its activity is regulated as follows. Allosterically activated by GTP. Functionally, catalyzes the conversion of uracil and 5-phospho-alpha-D-ribose 1-diphosphate (PRPP) to UMP and diphosphate. The protein is Uracil phosphoribosyltransferase of Paraburkholderia phytofirmans (strain DSM 17436 / LMG 22146 / PsJN) (Burkholderia phytofirmans).